A 917-amino-acid chain; its full sequence is DNA topoisomerase 1 beta (917 aa).

Residues 1–368 form a disordered region; sequence MATEAFVKPV…SLPSGDGQKK (368 aa). The span at 32–63 shows a compositional bias: polar residues; sequence RNSNTAATTNRPSPINNAMRNSAIGSTKSSPP. Low complexity predominate over residues 66–82; sequence SPLTSPNRSASSSTRSS. The span at 89–100 shows a compositional bias: polar residues; the sequence is PSSSSVQRSTLK. Basic and acidic residues-rich tracts occupy residues 102–116 and 134–149; these read PLRD…ERNG and DKPL…KEVT. The segment covering 150–170 has biased composition (polar residues); it reads KQPSSSGRGSTQQAVQKSNMR. Basic and acidic residues predominate over residues 177 to 187; that stretch reads YTKKKVLDERA. Positions 189–205 are enriched in polar residues; the sequence is MSSTVQTKTSVGTSSSK. 2 stretches are compositionally biased toward basic and acidic residues: residues 256–265 and 296–307; these read KLSEPARPVK and VKEDNSDGDDHV. Serine 301 is modified (phosphoserine). Low complexity predominate over residues 316 to 338; that stretch reads DSSNNKSSSAKPSSSKMIASSSR. Interaction with DNA regions lie at residues 575 to 576, 638 to 643, and 729 to 731; these read KY, RAGNEK, and TAK. Residues 582 to 912 enclose the Topo IB-type catalytic domain; that stretch reads SSSLKGQSDK…MDVDPEFRFC (331 aa). Residues 779–858 are a coiled coil; that stretch reads VSKSHGAQVE…ERDMQTKEDM (80 aa). The active-site O-(3'-phospho-DNA)-tyrosine intermediate is the tyrosine 870.

The protein belongs to the type IB topoisomerase family.

The protein localises to the nucleus. The catalysed reaction is ATP-independent breakage of single-stranded DNA, followed by passage and rejoining.. Its function is as follows. Releases the supercoiling and torsional tension of DNA introduced during the DNA replication and transcription by transiently cleaving and rejoining one strand of the DNA duplex. Introduces a single-strand break via transesterification at a target site in duplex DNA. The scissile phosphodiester is attacked by the catalytic tyrosine of the enzyme, resulting in the formation of a DNA-(3'-phosphotyrosyl)-enzyme intermediate and the expulsion of a 5'-OH DNA strand. The free DNA strand then rotates around the intact phosphodiester bond on the opposing strand, thus removing DNA supercoils. Finally, in the religation step, the DNA 5'-OH attacks the covalent intermediate to expel the active-site tyrosine and restore the DNA phosphodiester backbone. Topoisomerases 1 enzymes (TOP1A and TOP1B) are essential for plant survival. This Arabidopsis thaliana (Mouse-ear cress) protein is DNA topoisomerase 1 beta.